The chain runs to 575 residues: Isocitrate dehydrogenase kinase/phosphatase (575 aa).

Residues 315 to 321 (APGVKGM) and K336 each bind ATP. The active site involves D371.

Belongs to the AceK family.

The protein resides in the cytoplasm. It carries out the reaction L-seryl-[isocitrate dehydrogenase] + ATP = O-phospho-L-seryl-[isocitrate dehydrogenase] + ADP + H(+). Bifunctional enzyme which can phosphorylate or dephosphorylate isocitrate dehydrogenase (IDH) on a specific serine residue. This is a regulatory mechanism which enables bacteria to bypass the Krebs cycle via the glyoxylate shunt in response to the source of carbon. When bacteria are grown on glucose, IDH is fully active and unphosphorylated, but when grown on acetate or ethanol, the activity of IDH declines drastically concomitant with its phosphorylation. The sequence is that of Isocitrate dehydrogenase kinase/phosphatase from Yersinia pseudotuberculosis serotype O:1b (strain IP 31758).